The chain runs to 175 residues: Large ribosomal subunit protein uL5 (175 aa).

This sequence belongs to the universal ribosomal protein uL5 family. As to quaternary structure, part of the 50S ribosomal subunit; contacts the 5S rRNA and probably tRNA. Forms a bridge to the 30S subunit in the 70S ribosome.

This is one of the proteins that bind and probably mediate the attachment of the 5S RNA into the large ribosomal subunit, where it forms part of the central protuberance. In the 70S ribosome it contacts protein S13 of the 30S subunit (bridge B1b), connecting the 2 subunits; this bridge is implicated in subunit movement. May contact the P site tRNA; the 5S rRNA and some of its associated proteins might help stabilize positioning of ribosome-bound tRNAs. The polypeptide is Large ribosomal subunit protein uL5 (Halobacterium salinarum (strain ATCC 29341 / DSM 671 / R1)).